The primary structure comprises 260 residues: Thiazole synthase (260 aa).

Lysine 102 (schiff-base intermediate with DXP) is an active-site residue. 1-deoxy-D-xylulose 5-phosphate is bound by residues glycine 163, 189–190 (AG), and 211–212 (NT).

The protein belongs to the ThiG family. In terms of assembly, homotetramer. Forms heterodimers with either ThiH or ThiS.

The protein localises to the cytoplasm. The catalysed reaction is [ThiS sulfur-carrier protein]-C-terminal-Gly-aminoethanethioate + 2-iminoacetate + 1-deoxy-D-xylulose 5-phosphate = [ThiS sulfur-carrier protein]-C-terminal Gly-Gly + 2-[(2R,5Z)-2-carboxy-4-methylthiazol-5(2H)-ylidene]ethyl phosphate + 2 H2O + H(+). The protein operates within cofactor biosynthesis; thiamine diphosphate biosynthesis. Functionally, catalyzes the rearrangement of 1-deoxy-D-xylulose 5-phosphate (DXP) to produce the thiazole phosphate moiety of thiamine. Sulfur is provided by the thiocarboxylate moiety of the carrier protein ThiS. In vitro, sulfur can be provided by H(2)S. The chain is Thiazole synthase from Geotalea uraniireducens (strain Rf4) (Geobacter uraniireducens).